A 305-amino-acid polypeptide reads, in one-letter code: Probable 4-deoxy-4-formamido-L-arabinose-phosphoundecaprenol deformylase ArnD (305 aa).

Residues 7–262 (TKVGLRIDVD…QAKENNIEFV (256 aa)) form the NodB homology domain.

This sequence belongs to the polysaccharide deacetylase family. ArnD deformylase subfamily.

The catalysed reaction is 4-deoxy-4-formamido-alpha-L-arabinopyranosyl di-trans,octa-cis-undecaprenyl phosphate + H2O = 4-amino-4-deoxy-alpha-L-arabinopyranosyl di-trans,octa-cis-undecaprenyl phosphate + formate. It functions in the pathway glycolipid biosynthesis; 4-amino-4-deoxy-alpha-L-arabinose undecaprenyl phosphate biosynthesis; 4-amino-4-deoxy-alpha-L-arabinose undecaprenyl phosphate from UDP-4-deoxy-4-formamido-beta-L-arabinose and undecaprenyl phosphate: step 2/2. Its pathway is bacterial outer membrane biogenesis; lipopolysaccharide biosynthesis. In terms of biological role, catalyzes the deformylation of 4-deoxy-4-formamido-L-arabinose-phosphoundecaprenol to 4-amino-4-deoxy-L-arabinose-phosphoundecaprenol. The modified arabinose is attached to lipid A and is required for resistance to polymyxin and cationic antimicrobial peptides. The sequence is that of Probable 4-deoxy-4-formamido-L-arabinose-phosphoundecaprenol deformylase ArnD from Shewanella sediminis (strain HAW-EB3).